A 667-amino-acid polypeptide reads, in one-letter code: DNA ligase (667 aa).

NAD(+) contacts are provided by residues 34 to 38, 83 to 84, and Glu-114; these read DQEYD and SL. Lys-116 (N6-AMP-lysine intermediate) is an active-site residue. Positions 137, 170, 286, and 310 each coordinate NAD(+). Residues Cys-404, Cys-407, Cys-422, and Cys-427 each coordinate Zn(2+). The 80-residue stretch at 588-667 folds into the BRCT domain; that stretch reads HLAQKFENYR…EFQQLLSKED (80 aa).

This sequence belongs to the NAD-dependent DNA ligase family. LigA subfamily. Mg(2+) serves as cofactor. The cofactor is Mn(2+).

It catalyses the reaction NAD(+) + (deoxyribonucleotide)n-3'-hydroxyl + 5'-phospho-(deoxyribonucleotide)m = (deoxyribonucleotide)n+m + AMP + beta-nicotinamide D-nucleotide.. Functionally, DNA ligase that catalyzes the formation of phosphodiester linkages between 5'-phosphoryl and 3'-hydroxyl groups in double-stranded DNA using NAD as a coenzyme and as the energy source for the reaction. It is essential for DNA replication and repair of damaged DNA. The polypeptide is DNA ligase (Spiroplasma citri).